A 304-amino-acid chain; its full sequence is MNQHTLLPKKTERLQYFGSVSPIKGEKPVEKEKMKDLQNIRKDYFFDIQHVGVANVSHPVTITSAMMPAEQTTAANFTMTCNLPRNQKGINMSRLTELLQVYHQNGWILSFSSLQQFTKELAENMDTSSATVEVRFPWFFERKSPKLEKAGLMHADIFMSVTYRKDQPFKQRAGISAKVTTLCPCSKEISEYSAHNQRGTVSIWADIHPAASLPSDVKADLLHAAESNASARLHPVLKRPDEKAVTETAYENPRFVEDLARLIAADLFELEWVSAFEIECRNEESIHLHDAYAKLCFSKEVDKI.

It belongs to the GTP cyclohydrolase IV family.

The enzyme catalyses GTP + H2O = 7,8-dihydroneopterin 3'-triphosphate + formate + H(+). It participates in cofactor biosynthesis; 7,8-dihydroneopterin triphosphate biosynthesis; 7,8-dihydroneopterin triphosphate from GTP: step 1/1. Converts GTP to 7,8-dihydroneopterin triphosphate. The sequence is that of GTP cyclohydrolase FolE2 (folE2) from Bacillus subtilis (strain 168).